Here is a 640-residue protein sequence, read N- to C-terminus: Threonine--tRNA ligase (640 aa).

Residues 1–61 (MPIIALPDGN…EKDSEVNIIT (61 aa)) form the TGS domain. The segment at 242–533 (DHRRIAKQMS…LIEHYAGRLP (292 aa)) is catalytic. Zn(2+) is bound by residues Cys-333, His-384, and His-510.

It belongs to the class-II aminoacyl-tRNA synthetase family. Homodimer. The cofactor is Zn(2+).

The protein localises to the cytoplasm. The enzyme catalyses tRNA(Thr) + L-threonine + ATP = L-threonyl-tRNA(Thr) + AMP + diphosphate + H(+). Catalyzes the attachment of threonine to tRNA(Thr) in a two-step reaction: L-threonine is first activated by ATP to form Thr-AMP and then transferred to the acceptor end of tRNA(Thr). Also edits incorrectly charged L-seryl-tRNA(Thr). In Prochlorococcus marinus (strain MIT 9313), this protein is Threonine--tRNA ligase.